The sequence spans 402 residues: MSSTPEAETMECGISSSKVHDSKTNTTYGIIHNSINGTDTTLFDTFPDSTDNAEVTGDVDDVKTESSPESQSEDLSPFGNDGNESPETVTDIDAVSAVRMQYNIVSSLPPGSEGYIYVCTKRGDNTKRKVIVKAVTGGKTLGSEIDILKKMSHRSIIRLVHAYRWKSTVCMVMPKYKCDLFTYIDIMGPLPLNQIITIERGLLGALAYIHEKGIIHRDVKTENIFLDKPENVVLGDFGAACKLDEHTDKPKCYGWSGTLETNSPELLALDPYCTKTDIWSAGLVLFEMSVKNITFFGKQVNGSGSQLRSIIRCLQVHPLEFPQNNSTNLCKHFKQYAIQLRHPYAIPQIIRKSGMTMDLEYAIAKMLTFDQEFRPSAQDILMLPLFTKEPADALYTITAAHM.

Disordered stretches follow at residues 1 to 21 (MSST…KVHD) and 46 to 88 (FPDS…SPET). Residues 102 to 386 (YNIVSSLPPG…AQDILMLPLF (285 aa)) enclose the Protein kinase domain. Residues 110 to 118 (PGSEGYIYV) and Lys-127 contribute to the ATP site. Catalysis depends on Asp-218, which acts as the Proton acceptor.

Belongs to the protein kinase superfamily. Ser/Thr protein kinase family. In terms of processing, phosphorylated by UL13 homolog; this phosphorylation regulates subsequent phosphorylation of UL31 and UL34 homologs by US3. Autophosphorylated.

It is found in the host cytoplasm. The protein resides in the host nucleus. The enzyme catalyses L-seryl-[protein] + ATP = O-phospho-L-seryl-[protein] + ADP + H(+). The catalysed reaction is L-threonyl-[protein] + ATP = O-phospho-L-threonyl-[protein] + ADP + H(+). Functionally, multifunctional serine/threonine kinase that plays a role in several processes including egress of virus particles from the nucleus, modulation of the actin cytoskeleton and inhibition of apoptosis. Phosphorylates UL31 and UL34 homologs, two critical regulators of capsid budding from nucleus to endoplasmic reticulum, thereby facilitating virion egress. Modulates and redistributes host components of the nuclear envelope, including LMNA, emerin/EMD and the nuclear matrix protein MATR3. Phosphorylates envelope glycoprotein B (gB), probably to direct it to the cell surface. Promotes virus intracellular spread by restructuring host cell cytoskeleton. Blocks host apoptosis to extend cell survival and allow efficient viral replication. Promotes viral gene expression by phosphorylating host HDAC2 to reduce viral genome silencing. The polypeptide is Serine/threonine-protein kinase US3 homolog (US1206) (Gallid herpesvirus 2 (strain GA) (GaHV-2)).